The sequence spans 393 residues: Telomeric repeat-binding factor 2-interacting protein 1 (393 aa).

Alanine 2 is subject to N-acetylalanine. Phosphoserine occurs at positions 36 and 43. In terms of domain architecture, BRCT spans 78 to 101 (FISTQYILDCVDRNEKLDLEAYRL). The disordered stretch occupies residues 104–132 (TEQASDPKPGASTEGSTEPEPQPLTGRIA). Residue lysine 111 forms a Glycyl lysine isopeptide (Lys-Gly) (interchain with G-Cter in SUMO2) linkage. The region spanning 125 to 185 (QPLTGRIAYT…SLKDRYLKHL (61 aa)) is the Myb-like domain. Serine 151 and serine 153 each carry phosphoserine. A Glycyl lysine isopeptide (Lys-Gly) (interchain with G-Cter in SUMO2) cross-link involves residue lysine 191. Positions 193–304 (LLGNAPVSPS…EEEPKVSTQE (112 aa)) are disordered. Phosphoserine occurs at positions 200 and 203. Residues lysine 205, lysine 209, and lysine 237 each participate in a glycyl lysine isopeptide (Lys-Gly) (interchain with G-Cter in SUMO2) cross-link. Basic and acidic residues predominate over residues 223–252 (QNKRAPDLPEEECVKGEIKENGEADNKLFE). Over residues 282–297 (TPEEDSETQPDEEEEE) the composition is skewed to acidic residues. A Glycyl lysine isopeptide (Lys-Gly) (interchain with G-Cter in SUMO2) cross-link involves residue lysine 366. Residues 377–393 (KKFGAQNVARRIEFRKK) carry the Nuclear localization signal motif.

This sequence belongs to the RAP1 family. As to quaternary structure, homodimer. Component of the shelterin complex (telosome) composed of TERF1, TERF2, TINF2, TERF2IP ACD and POT1. Binds to TERF2 (but not TERF1) with its C-terminus. Interacts with SLX4/BTBD12. Interacts with TERF2; the interaction is direct. Does not interact with TERF1. Associates with the I-kappa-B-kinase (IKK) core complex, composed of CHUK, IKBKB and IKBKG.

The protein resides in the nucleus. Its subcellular location is the cytoplasm. It localises to the chromosome. It is found in the telomere. Acts both as a regulator of telomere function and as a transcription regulator. Involved in the regulation of telomere length and protection as a component of the shelterin complex (telosome). In contrast to other components of the shelterin complex, it is dispensible for telomere capping and does not participate in the protection of telomeres against non-homologous end-joining (NHEJ)-mediated repair. Instead, it is required to negatively regulate telomere recombination and is essential for repressing homology-directed repair (HDR), which can affect telomere length. Does not bind DNA directly: recruited to telomeric double-stranded 5'-TTAGGG-3' repeats via its interaction with TERF2. Independently of its function in telomeres, also acts as a transcription regulator: recruited to extratelomeric 5'-TTAGGG-3' sites via its association with TERF2 or other factors, and regulates gene expression. When cytoplasmic, associates with the I-kappa-B-kinase (IKK) complex and acts as a regulator of the NF-kappa-B signaling by promoting IKK-mediated phosphorylation of RELA/p65, leading to activate expression of NF-kappa-B target genes. This is Telomeric repeat-binding factor 2-interacting protein 1 (Terf2ip) from Mus musculus (Mouse).